An 883-amino-acid polypeptide reads, in one-letter code: Integrator complex subunit 6 (883 aa).

Positions Ile-3–Val-227 constitute a VWFA domain. Positions Met-625 to Glu-632 match the Inhibitory loop motif. The interval Arg-666–Thr-686 is disordered. Phosphoserine is present on Ser-800.

Belongs to the Integrator subunit 6 family. Component of the Integrator complex, composed of core subunits INTS1, INTS2, INTS3, INTS4, INTS5, INTS6, INTS7, INTS8, INTS9/RC74, INTS10, INTS11/CPSF3L, INTS12, INTS13, INTS14 and INTS15. The core complex associates with protein phosphatase 2A subunits PPP2CA and PPP2R1A, to form the Integrator-PP2A (INTAC) complex.

Its subcellular location is the nucleus. The protein resides in the chromosome. Functionally, component of the integrator complex, a multiprotein complex that terminates RNA polymerase II (Pol II) transcription in the promoter-proximal region of genes. The integrator complex provides a quality checkpoint during transcription elongation by driving premature transcription termination of transcripts that are unfavorably configured for transcriptional elongation: the complex terminates transcription by (1) catalyzing dephosphorylation of the C-terminal domain (CTD) of Pol II subunit POLR2A/RPB1 and SUPT5H/SPT5, (2) degrading the exiting nascent RNA transcript via endonuclease activity and (3) promoting the release of Pol II from bound DNA. The integrator complex is also involved in terminating the synthesis of non-coding Pol II transcripts, such as enhancer RNAs (eRNAs), small nuclear RNAs (snRNAs), telomerase RNAs and long non-coding RNAs (lncRNAs). Within the integrator complex, INTS6 acts as a molecular adapter that promotes assembly of protein phosphatase 2A (PP2A) subunits to the integrator core complex, promoting recruitment of PP2A to transcription pause-release checkpoint. Mediates recruitment of cytoplasmic dynein to the nuclear envelope, probably as component of the integrator complex. This Mus musculus (Mouse) protein is Integrator complex subunit 6 (Ints6).